The primary structure comprises 456 residues: Zinc finger C2HC domain-containing protein 1C (456 aa).

Disordered regions lie at residues 16–46 and 85–113; these read MLPH…QSLK and YPHC…SSGP. Polar residues-rich tracts occupy residues 35-46 and 90-102; these read YEQGDSSQQSLK and GISQ…DSQG. A coiled-coil region spans residues 211-265; the sequence is VQIRRLEAAGESLEEEIRRKQILLRGKLKKTEEELRRIQTQKEQAKENENGELQK. Residues 336–388 are disordered; sequence NKIRDPVSEPSVEKFSPPSETPVGALQGSARNSSLSMAPDSSGSSGSIEEPQL. A compositionally biased stretch (low complexity) spans 368–382; it reads SSLSMAPDSSGSSGS. The C2HC/C3H-type zinc finger occupies 387–416; that stretch reads QLGECSHCGRKFLSFRLERHSNICSRMRGS. 4 residues coordinate Zn(2+): Cys-391, Cys-394, His-406, and Cys-410.

This sequence belongs to the ZC2HC1 family. Zn(2+) is required as a cofactor.

The chain is Zinc finger C2HC domain-containing protein 1C (ZC2HC1C) from Homo sapiens (Human).